The following is a 512-amino-acid chain: Maturase K (512 aa).

Belongs to the intron maturase 2 family. MatK subfamily.

Its subcellular location is the plastid. The protein localises to the chloroplast. Usually encoded in the trnK tRNA gene intron. Probably assists in splicing its own and other chloroplast group II introns. The polypeptide is Maturase K (Wolffiella gladiata (Florida mud-midget)).